A 350-amino-acid chain; its full sequence is Holliday junction branch migration complex subunit RuvB (350 aa).

The large ATPase domain (RuvB-L) stretch occupies residues 1-183 (MSAERLVNPH…FVAVHRLVFY (183 aa)). ATP-binding positions include L22, R23, G64, K67, T68, S69, 130 to 132 (EDF), R173, Y183, and R220. T68 provides a ligand contact to Mg(2+). The tract at residues 184–254 (SDDAMTEIVS…VARDALAQLE (71 aa)) is small ATPAse domain (RuvB-S). Residues 257–350 (ELGLDENDRR…ESGPQQATLF (94 aa)) are head domain (RuvB-H). The DNA site is built by R312 and R317. Positions 331–350 (YPERTLPADDESGPQQATLF) are disordered.

This sequence belongs to the RuvB family. In terms of assembly, homohexamer. Forms an RuvA(8)-RuvB(12)-Holliday junction (HJ) complex. HJ DNA is sandwiched between 2 RuvA tetramers; dsDNA enters through RuvA and exits via RuvB. An RuvB hexamer assembles on each DNA strand where it exits the tetramer. Each RuvB hexamer is contacted by two RuvA subunits (via domain III) on 2 adjacent RuvB subunits; this complex drives branch migration. In the full resolvosome a probable DNA-RuvA(4)-RuvB(12)-RuvC(2) complex forms which resolves the HJ.

The protein localises to the cytoplasm. The enzyme catalyses ATP + H2O = ADP + phosphate + H(+). The RuvA-RuvB-RuvC complex processes Holliday junction (HJ) DNA during genetic recombination and DNA repair, while the RuvA-RuvB complex plays an important role in the rescue of blocked DNA replication forks via replication fork reversal (RFR). RuvA specifically binds to HJ cruciform DNA, conferring on it an open structure. The RuvB hexamer acts as an ATP-dependent pump, pulling dsDNA into and through the RuvAB complex. RuvB forms 2 homohexamers on either side of HJ DNA bound by 1 or 2 RuvA tetramers; 4 subunits per hexamer contact DNA at a time. Coordinated motions by a converter formed by DNA-disengaged RuvB subunits stimulates ATP hydrolysis and nucleotide exchange. Immobilization of the converter enables RuvB to convert the ATP-contained energy into a lever motion, pulling 2 nucleotides of DNA out of the RuvA tetramer per ATP hydrolyzed, thus driving DNA branch migration. The RuvB motors rotate together with the DNA substrate, which together with the progressing nucleotide cycle form the mechanistic basis for DNA recombination by continuous HJ branch migration. Branch migration allows RuvC to scan DNA until it finds its consensus sequence, where it cleaves and resolves cruciform DNA. In Chloroflexus aurantiacus (strain ATCC 29366 / DSM 635 / J-10-fl), this protein is Holliday junction branch migration complex subunit RuvB.